The following is a 465-amino-acid chain: Chromosomal replication initiator protein DnaA (465 aa).

The domain I, interacts with DnaA modulators stretch occupies residues 1 to 84; sequence MSLSLWQQCL…RFEVGSKPLV (84 aa). Residues 84 to 128 are domain II; sequence VQTISQPAQSHHNPVSVARQQPVRMAPVRPSWDNSPVQAEHTYRS. Positions 129–345 are domain III, AAA+ region; it reads NVNPKHTFDN…GALNRVIANA (217 aa). ATP contacts are provided by glycine 173, glycine 175, lysine 176, and threonine 177. Positions 346–465 are domain IV, binds dsDNA; it reads NFTGRSITID…FSNLIRTLSS (120 aa).

Belongs to the DnaA family. Oligomerizes as a right-handed, spiral filament on DNA at oriC.

It localises to the cytoplasm. In terms of biological role, plays an essential role in the initiation and regulation of chromosomal replication. ATP-DnaA binds to the origin of replication (oriC) to initiate formation of the DNA replication initiation complex once per cell cycle. Binds the DnaA box (a 9 base pair repeat at the origin) and separates the double-stranded (ds)DNA. Forms a right-handed helical filament on oriC DNA; dsDNA binds to the exterior of the filament while single-stranded (ss)DNA is stabiized in the filament's interior. The ATP-DnaA-oriC complex binds and stabilizes one strand of the AT-rich DNA unwinding element (DUE), permitting loading of DNA polymerase. After initiation quickly degrades to an ADP-DnaA complex that is not apt for DNA replication. Binds acidic phospholipids. The sequence is that of Chromosomal replication initiator protein DnaA from Pectobacterium atrosepticum (strain SCRI 1043 / ATCC BAA-672) (Erwinia carotovora subsp. atroseptica).